A 78-amino-acid chain; its full sequence is NAD(P)H-quinone oxidoreductase subunit O (78 aa).

The protein belongs to the complex I NdhO subunit family. As to quaternary structure, NDH-1 can be composed of about 15 different subunits; different subcomplexes with different compositions have been identified which probably have different functions.

The protein localises to the cellular thylakoid membrane. It catalyses the reaction a plastoquinone + NADH + (n+1) H(+)(in) = a plastoquinol + NAD(+) + n H(+)(out). It carries out the reaction a plastoquinone + NADPH + (n+1) H(+)(in) = a plastoquinol + NADP(+) + n H(+)(out). NDH-1 shuttles electrons from an unknown electron donor, via FMN and iron-sulfur (Fe-S) centers, to quinones in the respiratory and/or the photosynthetic chain. The immediate electron acceptor for the enzyme in this species is believed to be plastoquinone. Couples the redox reaction to proton translocation, and thus conserves the redox energy in a proton gradient. Cyanobacterial NDH-1 also plays a role in inorganic carbon-concentration. In Prochlorococcus marinus (strain MIT 9215), this protein is NAD(P)H-quinone oxidoreductase subunit O.